A 20-amino-acid polypeptide reads, in one-letter code: Pollen allergen Beta v 1 (20 aa).

This sequence belongs to the Ole e I family.

The protein resides in the secreted. The polypeptide is Pollen allergen Beta v 1 (Beta vulgaris (Sugar beet)).